We begin with the raw amino-acid sequence, 472 residues long: MAQANFGVVGMAVMGKNLALNVESRGYTVAIYNRTTSKTEEVYKEHQDKNLVFTKTLEEFVGSLEKPRRIMLMVQAGAATDATIKSLLPLLDIGDILIDGGNTHFPDTMRRNAELADSGINFIGTGVSGGEKGALLGPSMMPGGQKEAYDLVAPIFEQIAAKAPQDGKPCVAYMGANGAGHYVKMVHNGIEYGDMQLIAESYDLLKRILGLSNAEIQAIFEEWNEGELDSYLIEITKEVLKRKDDEGEGYIVDKILDKAGNKGTGKWTSESALDLGVPLPLITESVFARYISTYKDERVKASKVLSGPALDFSGDKKEVIEKIRKALYFSKIMSYAQGFAQLRKASEEFDWDLPYGTIAQIWRAGCIIRAEFLQNITDAFDKDSELENLLLDDYFVDITKRYQEAVRDVVSLAVQAGTPIPTFTSAISYYDSYRSENLPANLIQAQRDYFGAHTYERTDKAGIFHYDWYTED.

Residues 10–15 (GMAVMG), 33–35 (NRT), 74–76 (VQA), and Asn-102 each bind NADP(+). Residues Asn-102 and 128–130 (SGG) contribute to the substrate site. Lys-184 (proton acceptor) is an active-site residue. 187–188 (HN) serves as a coordination point for substrate. Residue Glu-191 is the Proton donor of the active site. The substrate site is built by Tyr-192, Lys-262, Arg-289, Arg-447, and His-453.

This sequence belongs to the 6-phosphogluconate dehydrogenase family. Homodimer.

The catalysed reaction is 6-phospho-D-gluconate + NADP(+) = D-ribulose 5-phosphate + CO2 + NADPH. Its pathway is carbohydrate degradation; pentose phosphate pathway; D-ribulose 5-phosphate from D-glucose 6-phosphate (oxidative stage): step 3/3. Catalyzes the oxidative decarboxylation of 6-phosphogluconate to ribulose 5-phosphate and CO(2), with concomitant reduction of NADP to NADPH. The sequence is that of 6-phosphogluconate dehydrogenase, decarboxylating (gnd) from Lactococcus lactis subsp. cremoris (strain MG1363).